The chain runs to 508 residues: Photosystem II CP47 reaction center protein (508 aa).

6 helical membrane passes run 21-36 (AVHIMHTALVAGWAGS), 101-115 (ILFSGLCFLAAIWHW), 140-156 (GIHLFLSGLACFGFGAF), 203-218 (IAAGTLGILAGLFHLS), 237-252 (VLSSSIAAVFFAAFVV), and 457-472 (SFALLFFFGHIWHGAR).

It belongs to the PsbB/PsbC family. PsbB subfamily. In terms of assembly, PSII is composed of 1 copy each of membrane proteins PsbA, PsbB, PsbC, PsbD, PsbE, PsbF, PsbH, PsbI, PsbJ, PsbK, PsbL, PsbM, PsbT, PsbX, PsbY, PsbZ, Psb30/Ycf12, at least 3 peripheral proteins of the oxygen-evolving complex and a large number of cofactors. It forms dimeric complexes. Binds multiple chlorophylls. PSII binds additional chlorophylls, carotenoids and specific lipids. serves as cofactor.

It is found in the plastid. The protein localises to the chloroplast thylakoid membrane. Its function is as follows. One of the components of the core complex of photosystem II (PSII). It binds chlorophyll and helps catalyze the primary light-induced photochemical processes of PSII. PSII is a light-driven water:plastoquinone oxidoreductase, using light energy to abstract electrons from H(2)O, generating O(2) and a proton gradient subsequently used for ATP formation. The polypeptide is Photosystem II CP47 reaction center protein (Oenothera biennis (German evening primrose)).